The following is a 175-amino-acid chain: Transcription factor E (175 aa).

One can recognise an HTH TFE/IIEalpha-type domain in the interval 3-88 (ENPLIQQVLF…TWKPSLEKVP (86 aa)).

This sequence belongs to the TFE family. As to quaternary structure, monomer. Interaction with RNA polymerase subunits RpoF and RpoE is necessary for Tfe stimulatory transcription activity. Able to interact with Tbp and RNA polymerase in the absence of DNA promoter. Interacts both with the preinitiation and elongation complexes.

Transcription factor that plays a role in the activation of archaeal genes transcribed by RNA polymerase. Facilitates transcription initiation by enhancing TATA-box recognition by TATA-box-binding protein (Tbp), and transcription factor B (Tfb) and RNA polymerase recruitment. Not absolutely required for transcription in vitro, but particularly important in cases where Tbp or Tfb function is not optimal. It dynamically alters the nucleic acid-binding properties of RNA polymerases by stabilizing the initiation complex and destabilizing elongation complexes. Seems to translocate with the RNA polymerase following initiation and acts by binding to the non template strand of the transcription bubble in elongation complexes. The sequence is that of Transcription factor E from Methanococcus maripaludis (strain DSM 14266 / JCM 13030 / NBRC 101832 / S2 / LL).